Consider the following 117-residue polypeptide: uncharacterized protein (117 aa).

Polar residues predominate over residues 1-12 (MAQNSVSLSAGD). 2 disordered regions span residues 1 to 30 (MAQN…NPSA) and 43 to 87 (VTRL…SPYP).

This is an uncharacterized protein from Mus musculus (Mouse).